The chain runs to 72 residues: Hypotensin-1 (72 aa).

A signal peptide spans 1–24; the sequence is MKMMIPVIFSILLLIFSLSSTAMS. Positions 25–35 are excised as a propeptide; the sequence is LEDEQENMEER. S41 is modified (phosphoserine). The interval 53–72 is disordered; sequence ETNAKPPARFDPAAFEKSDD. Residues 61 to 72 constitute a propeptide that is removed on maturation; sequence RFDPAAFEKSDD.

It belongs to the non-disulfide-bridged peptide (NDBP) superfamily. Post-translationally, undergoes enzymatic cleavages by carboxypeptidases, endopeptidases, and aminopeptidases resulting in at least 46 fragments of this protein. In terms of tissue distribution, expressed by the venom gland.

The protein localises to the secreted. Agonist of the B2 bradykinin receptor (BDKRB2). Potentiates the hypotensive effect of bradykinin (BK) and induces a direct vasorelaxing effect independent of BK, by endothelium- and nitric oxide (NO)-dependent mechanisms in rat aortic ring preparations. Also exerts proangiogenic, antiinflammatory, and antifibrogenic activities. Does not inhibit the angiotensin-converting enzyme (ACE) but increases its activity, and inhibits neprilysin (NEP) in a non-competitive manner. Exerts intermediate cytotoxicity and pro-inflammatory effects on mouse macrophages, and increases the phagocytic activity of these murine cells. In terms of biological role, presents moderate hemolytic activity at physiological concentrations (micromolar range). Does not induce mast cell degranulation, lactate dehydrogenase (LDH) release from mast cells and antimicrobial effects. In vivo, causes intense pain (but no edema formation), when injected in mice hind paws. Also induces discomfort and anxiety in mice, as it moderately diminishes locomotion and moderately increases rearing behavior. This is Hypotensin-1 from Tityus serrulatus (Brazilian scorpion).